The chain runs to 273 residues: NAD-dependent protein deacetylase 2 (273 aa).

Residues 1–273 (MSNAPLANQS…RCEAALAFLL (273 aa)) enclose the Deacetylase sirtuin-type domain. Residues 26 to 46 (GAGCSTNSGIPDYRDSHGNWK) and 104 to 107 (QNVD) each bind NAD(+). H122 acts as the Proton acceptor in catalysis. Zn(2+)-binding residues include C130, C133, C181, and C184. NAD(+)-binding positions include 221-223 (GSS), 247-249 (NLG), and C265.

The protein belongs to the sirtuin family. Class II subfamily. It depends on Zn(2+) as a cofactor.

The protein localises to the cytoplasm. The catalysed reaction is N(6)-acetyl-L-lysyl-[protein] + NAD(+) + H2O = 2''-O-acetyl-ADP-D-ribose + nicotinamide + L-lysyl-[protein]. In terms of biological role, NAD-dependent protein deacetylase which modulates the activities of several enzymes which are inactive in their acetylated form. The chain is NAD-dependent protein deacetylase 2 from Bradyrhizobium diazoefficiens (strain JCM 10833 / BCRC 13528 / IAM 13628 / NBRC 14792 / USDA 110).